Consider the following 228-residue polypeptide: Cytidylate kinase (228 aa).

12-20 (GPSGSGKGT) lines the ATP pocket.

This sequence belongs to the cytidylate kinase family. Type 1 subfamily.

The protein localises to the cytoplasm. It carries out the reaction CMP + ATP = CDP + ADP. The enzyme catalyses dCMP + ATP = dCDP + ADP. In Pseudomonas putida (strain ATCC 47054 / DSM 6125 / CFBP 8728 / NCIMB 11950 / KT2440), this protein is Cytidylate kinase.